The following is an 808-amino-acid chain: Anaphase-promoting complex subunit 4 (808 aa).

Position 469 is a phosphotyrosine (Tyr-469). A phosphoserine mark is found at Ser-757 and Ser-758. Residue Lys-772 forms a Glycyl lysine isopeptide (Lys-Gly) (interchain with G-Cter in SUMO2) linkage. Ser-777 and Ser-779 each carry phosphoserine. A Glycyl lysine isopeptide (Lys-Gly) (interchain with G-Cter in SUMO2) cross-link involves residue Lys-798.

This sequence belongs to the APC4 family. In terms of assembly, the mammalian APC/C is composed at least of 14 distinct subunits ANAPC1, ANAPC2, CDC27/APC3, ANAPC4, ANAPC5, CDC16/APC6, ANAPC7, CDC23/APC8, ANAPC10, ANAPC11, CDC26/APC12, ANAPC13, ANAPC15 and ANAPC16 that assemble into a complex of at least 19 chains with a combined molecular mass of around 1.2 MDa; APC/C interacts with FZR1 and FBXO5. In the context of the APC/C complex, directly interacts with UBE2S. Interacts with FBXO43.

Its subcellular location is the nucleus. The protein operates within protein modification; protein ubiquitination. In terms of biological role, component of the anaphase promoting complex/cyclosome (APC/C), a cell cycle-regulated E3 ubiquitin ligase that controls progression through mitosis and the G1 phase of the cell cycle. The APC/C complex acts by mediating ubiquitination and subsequent degradation of target proteins: it mainly mediates the formation of 'Lys-11'-linked polyubiquitin chains and, to a lower extent, the formation of 'Lys-48'- and 'Lys-63'-linked polyubiquitin chains. The APC/C complex catalyzes assembly of branched 'Lys-11'-/'Lys-48'-linked branched ubiquitin chains on target proteins. This chain is Anaphase-promoting complex subunit 4 (ANAPC4), found in Homo sapiens (Human).